The following is a 385-amino-acid chain: Tryptophan--tRNA ligase (385 aa).

The 'HIGH' region motif lies at 89–98 (PSSKTMHIGH). The 'KMSKS' region motif lies at 268–272 (KMSAS).

This sequence belongs to the class-I aminoacyl-tRNA synthetase family. In terms of assembly, homodimer.

It carries out the reaction tRNA(Trp) + L-tryptophan + ATP = L-tryptophyl-tRNA(Trp) + AMP + diphosphate + H(+). The sequence is that of Tryptophan--tRNA ligase from Encephalitozoon cuniculi (strain GB-M1) (Microsporidian parasite).